A 353-amino-acid chain; its full sequence is S-adenosylmethionine:tRNA ribosyltransferase-isomerase (353 aa).

This sequence belongs to the QueA family. As to quaternary structure, monomer.

The protein resides in the cytoplasm. It catalyses the reaction 7-aminomethyl-7-carbaguanosine(34) in tRNA + S-adenosyl-L-methionine = epoxyqueuosine(34) in tRNA + adenine + L-methionine + 2 H(+). Its pathway is tRNA modification; tRNA-queuosine biosynthesis. In terms of biological role, transfers and isomerizes the ribose moiety from AdoMet to the 7-aminomethyl group of 7-deazaguanine (preQ1-tRNA) to give epoxyqueuosine (oQ-tRNA). The chain is S-adenosylmethionine:tRNA ribosyltransferase-isomerase from Dinoroseobacter shibae (strain DSM 16493 / NCIMB 14021 / DFL 12).